The primary structure comprises 122 residues: Small ribosomal subunit protein uS13 (122 aa).

Positions 95-122 (GLPVHGQRTKTNARTRKGPARTVAGKKK) are disordered.

Belongs to the universal ribosomal protein uS13 family. Part of the 30S ribosomal subunit. Forms a loose heterodimer with protein S19. Forms two bridges to the 50S subunit in the 70S ribosome.

Functionally, located at the top of the head of the 30S subunit, it contacts several helices of the 16S rRNA. In the 70S ribosome it contacts the 23S rRNA (bridge B1a) and protein L5 of the 50S subunit (bridge B1b), connecting the 2 subunits; these bridges are implicated in subunit movement. Contacts the tRNAs in the A and P-sites. In Geotalea uraniireducens (strain Rf4) (Geobacter uraniireducens), this protein is Small ribosomal subunit protein uS13.